Reading from the N-terminus, the 401-residue chain is 2-amino-3-carboxymuconate-6-semialdehyde decarboxylase (401 aa).

Zn(2+) is bound by residues His18 and His20. Substrate is bound at residue Arg59. Zn(2+)-binding residues include His234 and Asp352.

The protein belongs to the metallo-dependent hydrolases superfamily. ACMSD family. As to quaternary structure, monomer.

It carries out the reaction 2-amino-3-carboxymuconate 6-semialdehyde + H(+) = 2-aminomuconate 6-semialdehyde + CO2. The protein operates within secondary metabolite metabolism; quinolate metabolism. In terms of biological role, converts alpha-amino-beta-carboxymuconate-epsilon-semialdehyde (ACMS) to alpha-aminomuconate semialdehyde (AMS). In Caenorhabditis elegans, this protein is 2-amino-3-carboxymuconate-6-semialdehyde decarboxylase.